The chain runs to 299 residues: MQLSLPELSYTHKSITEFEPAIRNDGRSIDQLRPLSGQVDVLPGTNGSARVKWASSVEIVIGVKAEVGDATPEGGKYVASVEISPSVSIQNRETDEIPSFLTSALQDLLNALAVDYLKFTPSKAWIIHVDAVVILSSSPYENILSALSLAAYLALQTTRLPKISTPNVTDITIGSTKYEPSEEYDVDSEWENALPLQGLELMSVIILVSSIDQVIIVDPTIEESSVAQVTYAIGVQASGAISYTRVVGTGGGYASTGRAITVERYIELLETASTVGTKLLNASSDILSFKGLGFFDILP.

Belongs to the RNase PH family. In terms of assembly, component of the RNA exosome complex. Specifically part of the catalytically inactive RNA exosome core complex (Exo-9) which may associate with the catalytic subunits rrp6 and dis3 in cytoplasmic- and nuclear-specific RNA exosome complex forms. Exo-9 is formed by a hexameric base ring of RNase PH domain-containing subunits and a cap ring consisting of csl4, rrp4 and rrp40.

It localises to the cytoplasm. The protein resides in the nucleus. Its subcellular location is the nucleolus. Its function is as follows. Non-catalytic component of the RNA exosome complex which has 3'-&gt;5' exoribonuclease activity and participates in a multitude of cellular RNA processing and degradation events. In the nucleus, the RNA exosome complex is involved in proper maturation of stable RNA species such as rRNA, snRNA and snoRNA, in the elimination of RNA processing by-products and non-coding 'pervasive' transcripts, such as antisense RNA species and cryptic unstable transcripts (CUTs), and of mRNAs with processing defects, thereby limiting or excluding their export to the cytoplasm. In the cytoplasm, the RNA exosome complex is involved in general mRNA turnover and in RNA surveillance pathways, preventing translation of aberrant mRNAs. The catalytic inactive RNA exosome core complex of 9 subunits (Exo-9) is proposed to play a pivotal role in the binding and presentation of RNA for ribonucleolysis, and to serve as a scaffold for the association with catalytic subunits and accessory proteins or complexes. ski6 is part of the hexameric ring of RNase PH domain-containing subunits proposed to form a central channel which threads RNA substrates for degradation. The polypeptide is Exosome complex component rrp42 (rrp42) (Schizosaccharomyces pombe (strain 972 / ATCC 24843) (Fission yeast)).